Consider the following 259-residue polypeptide: Protein BEAN1 (259 aa).

The chain crosses the membrane as a helical span at residues 36–56 (VLVASAVIGVVIILSCITIIV). The segment covering 71–89 (RHRHHRHHHHHHHHRRRRH) has biased composition (basic residues). Disordered stretches follow at residues 71-91 (RHRH…RHRE) and 152-259 (VGPG…ERIV). The segment covering 171 to 187 (LTDSCPTLDGTSDSGSG) has biased composition (polar residues). Over residues 221–230 (GAGPPSGLLP) the composition is skewed to low complexity.

In terms of assembly, interacts with NEDD4.

The protein localises to the membrane. The chain is Protein BEAN1 (BEAN1) from Homo sapiens (Human).